Here is a 283-residue protein sequence, read N- to C-terminus: Polyamine aminopropyltransferase (283 aa).

Residues 2-237 (ELWYTDQHTK…GHWLFGFASK (236 aa)) form the PABS domain. Gln-31 contacts S-methyl-5'-thioadenosine. Residues His-62 and Asp-86 each coordinate spermidine. Residues Glu-106 and 137–138 (EG) each bind S-methyl-5'-thioadenosine. Catalysis depends on Asp-155, which acts as the Proton acceptor. 155–158 (DCAD) is a spermidine binding site. Pro-162 is an S-methyl-5'-thioadenosine binding site.

Belongs to the spermidine/spermine synthase family. Homodimer or homotetramer.

It is found in the cytoplasm. It catalyses the reaction S-adenosyl 3-(methylsulfanyl)propylamine + putrescine = S-methyl-5'-thioadenosine + spermidine + H(+). It participates in amine and polyamine biosynthesis; spermidine biosynthesis; spermidine from putrescine: step 1/1. Functionally, catalyzes the irreversible transfer of a propylamine group from the amino donor S-adenosylmethioninamine (decarboxy-AdoMet) to putrescine (1,4-diaminobutane) to yield spermidine. The polypeptide is Polyamine aminopropyltransferase (Lachnoclostridium phytofermentans (strain ATCC 700394 / DSM 18823 / ISDg) (Clostridium phytofermentans)).